The following is a 249-amino-acid chain: Globin-like protein 9 (249 aa).

The tract at residues 20 to 43 (TNKGPNGLARRGTQRGCSRSKSTR) is disordered. The 154-residue stretch at 52-205 (SLTFSQKQAL…LIDELRGGFE (154 aa)) folds into the Globin domain. 2 residues coordinate heme: His-116 and His-148.

Belongs to the globin family.

In Caenorhabditis elegans, this protein is Globin-like protein 9 (glb-9).